The primary structure comprises 292 residues: Protein SETSIP (292 aa).

A compositionally biased stretch (low complexity) spans 1 to 11 (MAPKRQSPLPL). Disordered regions lie at residues 1–43 (MAPK…EQQE) and 158–292 (LNES…GEDD). The stretch at 35–78 (KKGEKEQQEAIEHIDEVQNEIDRLNEQDSEEILKVEQKYNKLRQ) forms a coiled coil. Residues 237-292 (DMDDEEGGEDDDDDDDDGDEGEEELEDIDEGDEDEGEEDEDDDEGEEGEEDEGEDD) are compositionally biased toward acidic residues.

The protein belongs to the nucleosome assembly protein (NAP) family. Expressed in endothelial cell (EC) and protein-induced pluripotent stem (PiPS) endothelial cell (EC) (at protein level).

Its subcellular location is the cytoplasm. The protein localises to the nucleus. In terms of biological role, plays a role as a transcriptional activator involved in the early stage of somatic cell reprogramming. Promotes the differentiation of protein-induced pluripotent stem (PiPS) cells into endothelial cells and the formation of vascular-like tubes (in vitro). Involved in the transcription induction of vascular endothelial-cadherin (VE-cadherin) expression. Associates to the VE-cadherin gene promoter. The sequence is that of Protein SETSIP (SETSIP) from Homo sapiens (Human).